The following is a 368-amino-acid chain: MSAPIYLGVIGVGGVGTAFLNQLARLPNAPKLILLARSSQTLLSPTPSYSPTIPAAEWKTAVETPSLTKSGALTPDEIATYLASAPGRSILVDNTSDPALASNYPVFLRKGISVVTPNKKGFSSDLSLWKEIFAAAAEGKALVYHESTVGAGLPVISTLKDLVNTGDEVTRIEGVFSGTLSFLFNTFAPASGSSSAKWSEVVSQAKELGYTEPDPRDDLNGMDVARKLTILARIAGLDVQSPDSFPIESLIPAELTSLPSSADGIAQFMARLPEFDSQMAAIKEGAEKAGKVVRYVGSVDVAKKEVRVGLQQFDKDSAIAGLKGSDNIISFYTRRYGSNPLIVQGAGAGGDVTAMGVTADLLKVIERL.

Positions 12, 14, and 15 each coordinate NAD(+). Val-15 serves as a coordination point for NADP(+). 5 residues coordinate NADPH: Val-15, Lys-59, Thr-95, Ser-96, and Lys-119. Position 95 (Thr-95) interacts with NAD(+). Thr-95 provides a ligand contact to NADP(+). Residue Lys-119 participates in NADP(+) binding. The Na(+) site is built by Glu-146, Val-149, Ala-151, and Leu-153. Positions 209 and 212 each coordinate NADP(+). Residues Glu-212 and Asp-223 each coordinate L-homoserine. Lys-227 functions as the Proton donor in the catalytic mechanism. Gly-349 contributes to the NAD(+) binding site. Gly-349 serves as a coordination point for NADP(+). Gly-349 is an NADPH binding site.

This sequence belongs to the homoserine dehydrogenase family. It depends on a metal cation as a cofactor.

It catalyses the reaction L-homoserine + NADP(+) = L-aspartate 4-semialdehyde + NADPH + H(+). The enzyme catalyses L-homoserine + NAD(+) = L-aspartate 4-semialdehyde + NADH + H(+). The protein operates within amino-acid biosynthesis; L-methionine biosynthesis via de novo pathway; L-homoserine from L-aspartate: step 3/3. It functions in the pathway amino-acid biosynthesis; L-threonine biosynthesis; L-threonine from L-aspartate: step 3/5. Its function is as follows. Catalyzes the conversion of L-aspartate-beta-semialdehyde (L-Asa) to L-homoserine (L-Hse), the third step in the biosynthesis of amino acids that derive from aspartate (the aspartate family of amino acids), including methioinine and threonine, the latter of which is a precursor to isoleucine; production of homoserine leads to a branch-point in the pathway as it can either be O-phosphorylated for processing to threonine, or O-acylated for processing to methionine. This chain is Homoserine dehydrogenase, found in Emericella nidulans (strain FGSC A4 / ATCC 38163 / CBS 112.46 / NRRL 194 / M139) (Aspergillus nidulans).